Reading from the N-terminus, the 97-residue chain is DNA-directed RNA polymerase subunit omega (97 aa).

The span at 1–16 (MSTPNALAAFNSSPSL) shows a compositional bias: polar residues. The tract at residues 1-21 (MSTPNALAAFNSSPSLNAPEG) is disordered.

This sequence belongs to the RNA polymerase subunit omega family. As to quaternary structure, the RNAP catalytic core consists of 2 alpha, 1 beta, 1 beta' and 1 omega subunit. When a sigma factor is associated with the core the holoenzyme is formed, which can initiate transcription.

It carries out the reaction RNA(n) + a ribonucleoside 5'-triphosphate = RNA(n+1) + diphosphate. Its function is as follows. Promotes RNA polymerase assembly. Latches the N- and C-terminal regions of the beta' subunit thereby facilitating its interaction with the beta and alpha subunits. This chain is DNA-directed RNA polymerase subunit omega, found in Saccharopolyspora erythraea (strain ATCC 11635 / DSM 40517 / JCM 4748 / NBRC 13426 / NCIMB 8594 / NRRL 2338).